A 379-amino-acid chain; its full sequence is Elongation factor Ts, mitochondrial (379 aa).

Residues 1–45 (MALYRTARRPLQMMLFSRLGNPEQNYSSWARKDASQSAFGMFVRL) constitute a mitochondrion transit peptide.

Belongs to the EF-Ts family.

The protein resides in the mitochondrion. Functionally, associates with the EF-Tu.GDP complex and induces the exchange of GDP to GTP. It remains bound to the aminoacyl-tRNA.EF-Tu.GTP complex up to the GTP hydrolysis stage on the ribosome. In Ricinus communis (Castor bean), this protein is Elongation factor Ts, mitochondrial.